The following is a 526-amino-acid chain: Protein mono-ADP-ribosyltransferase PARP3 (526 aa).

A disordered region spans residues 1–55; sequence MAPKRRAPPASQPADGGKKAKGGQEEEEDAWSSALNALKTAPREKPPATIDGQCP. In terms of domain architecture, WGR spans 61–151; sequence DAKVYEDYDC…DNFVAQPGKY (91 aa). The 119-residue stretch at 183–301 folds into the PARP alpha-helical domain; the sequence is PCALDETTQK…DIEVAQSLQA (119 aa). A PARP catalytic domain is found at 312 to 526; sequence HPLDRDYALL…RIRYLVQLHF (215 aa).

It belongs to the ARTD/PARP family.

Its subcellular location is the nucleus. The protein resides in the chromosome. The protein localises to the cytoplasm. It localises to the cytoskeleton. It is found in the microtubule organizing center. Its subcellular location is the centrosome. The protein resides in the centriole. The enzyme catalyses L-aspartyl-[protein] + NAD(+) = 4-O-(ADP-D-ribosyl)-L-aspartyl-[protein] + nicotinamide. The catalysed reaction is L-glutamyl-[protein] + NAD(+) = 5-O-(ADP-D-ribosyl)-L-glutamyl-[protein] + nicotinamide. It catalyses the reaction L-lysyl-[protein] + NAD(+) = N(6)-(ADP-D-ribosyl)-L-lysyl-[protein] + nicotinamide + H(+). Its function is as follows. Mono-ADP-ribosyltransferase that mediates mono-ADP-ribosylation of target proteins and plays a key role in the response to DNA damage. Mediates mono-ADP-ribosylation of glutamate, aspartate or lysine residues on target proteins. In contrast to PARP1 and PARP2, it is not able to mediate poly-ADP-ribosylation. Involved in DNA repair by mediating mono-ADP-ribosylation of a limited number of acceptor proteins involved in chromatin architecture and in DNA metabolism, such as histone H2B, XRCC5 and XRCC6. ADP-ribosylation follows DNA damage and appears as an obligatory step in a detection/signaling pathway leading to the reparation of DNA strand breaks. Involved in single-strand break repair by catalyzing mono-ADP-ribosylation of histone H2B on 'Glu-2' (H2BE2ADPr) of nucleosomes containing nicked DNA. Cooperates with the XRCC5-XRCC6 (Ku80-Ku70) heterodimer to limit end-resection thereby promoting accurate NHEJ. Associates with a number of DNA repair factors and is involved in the response to exogenous and endogenous DNA strand breaks. Together with APLF, promotes the retention of the LIG4-XRCC4 complex on chromatin and accelerate DNA ligation during non-homologous end-joining (NHEJ). In addition to proteins, also able to ADP-ribosylate DNA: mediates DNA mono-ADP-ribosylation of DNA strand break termini via covalent addition of a single ADP-ribose moiety to a 5'- or 3'-terminal phosphate residues in DNA containing multiple strand breaks. The chain is Protein mono-ADP-ribosyltransferase PARP3 from Gallus gallus (Chicken).